The following is a 205-amino-acid chain: Recombination protein RecR (205 aa).

The segment at 64–79 (CSRCYFITQNDLCAIC) adopts a C4-type zinc-finger fold. Residues 87 to 182 (RIVCVVEEPL…RVTRLARGLP (96 aa)) form the Toprim domain.

It belongs to the RecR family.

May play a role in DNA repair. It seems to be involved in an RecBC-independent recombinational process of DNA repair. It may act with RecF and RecO. This is Recombination protein RecR from Roseiflexus castenholzii (strain DSM 13941 / HLO8).